Here is a 940-residue protein sequence, read N- to C-terminus: Isoleucine--tRNA ligase (940 aa).

Residues 58 to 68 (PYANGSIHIGH) carry the 'HIGH' region motif. Glutamate 563 contacts L-isoleucyl-5'-AMP. A 'KMSKS' region motif is present at residues 604 to 608 (KMSKS). Lysine 607 is a binding site for ATP. The Zn(2+) site is built by cysteine 902, cysteine 905, cysteine 922, and cysteine 925.

The protein belongs to the class-I aminoacyl-tRNA synthetase family. IleS type 1 subfamily. As to quaternary structure, monomer. It depends on Zn(2+) as a cofactor.

It localises to the cytoplasm. The catalysed reaction is tRNA(Ile) + L-isoleucine + ATP = L-isoleucyl-tRNA(Ile) + AMP + diphosphate. Functionally, catalyzes the attachment of isoleucine to tRNA(Ile). As IleRS can inadvertently accommodate and process structurally similar amino acids such as valine, to avoid such errors it has two additional distinct tRNA(Ile)-dependent editing activities. One activity is designated as 'pretransfer' editing and involves the hydrolysis of activated Val-AMP. The other activity is designated 'posttransfer' editing and involves deacylation of mischarged Val-tRNA(Ile). The polypeptide is Isoleucine--tRNA ligase (Marinomonas sp. (strain MWYL1)).